Consider the following 403-residue polypeptide: Histidine decarboxylase (403 aa).

His120 contributes to the substrate binding site. Position 233 is an N6-(pyridoxal phosphate)lysine (Lys233).

This sequence belongs to the group II decarboxylase family. In terms of assembly, homotetramer. It depends on pyridoxal 5'-phosphate as a cofactor.

The catalysed reaction is L-histidine + H(+) = histamine + CO2. The sequence is that of Histidine decarboxylase from Pseudomonas entomophila (strain L48).